Consider the following 501-residue polypeptide: Glucan endo-1,3-beta-glucosidase 3 (501 aa).

The N-terminal stretch at Met1–Ser18 is a signal peptide. N-linked (GlcNAc...) asparagine glycosylation is found at Asn88 and Asn107. Glu116 acts as the Proton donor in catalysis. 2 N-linked (GlcNAc...) asparagine glycosylation sites follow: Asn171 and Asn253. The active-site Nucleophile is the Glu263. Asn295, Asn353, and Asn357 each carry an N-linked (GlcNAc...) asparagine glycan. Cys361 and Cys424 are disulfide-bonded. N-linked (GlcNAc...) asparagine glycans are attached at residues Asn451, Asn456, Asn457, and Asn466. Ser470 is lipidated: GPI-anchor amidated serine. Residues Gly471–Leu501 constitute a propeptide, removed in mature form.

The protein belongs to the glycosyl hydrolase 17 family. Contains two additional disulfide bonds.

It localises to the cell membrane. It catalyses the reaction Hydrolysis of (1-&gt;3)-beta-D-glucosidic linkages in (1-&gt;3)-beta-D-glucans.. This chain is Glucan endo-1,3-beta-glucosidase 3, found in Arabidopsis thaliana (Mouse-ear cress).